We begin with the raw amino-acid sequence, 557 residues long: Glutamyl-tRNA(Gln) amidotransferase subunit B, mitochondrial (557 aa).

A mitochondrion-targeting transit peptide spans 1 to 41 (MAAPMLRWGCRGRRWAFARVDGGSCHRRGAPTGSTSNQIRG). Residues 26-45 (HRRGAPTGSTSNQIRGESSV) form a disordered region. The segment covering 32 to 45 (TGSTSNQIRGESSV) has biased composition (polar residues). The residue at position 529 (lysine 529) is an N6-succinyllysine.

This sequence belongs to the GatB/GatE family. GatB subfamily. In terms of assembly, subunit of the heterotrimeric GatCAB amidotransferase (AdT) complex, composed of A (QRSL1), B (GATB) and C (GATC) subunits. Predominantly expressed in tissues characterized by high rates of oxidative phosphorylation (OxPhos), including muscle and heart.

The protein resides in the mitochondrion. It catalyses the reaction L-glutamyl-tRNA(Gln) + L-glutamine + ATP + H2O = L-glutaminyl-tRNA(Gln) + L-glutamate + ADP + phosphate + H(+). In terms of biological role, allows the formation of correctly charged Gln-tRNA(Gln) through the transamidation of misacylated Glu-tRNA(Gln) in the mitochondria. The reaction takes place in the presence of glutamine and ATP through an activated gamma-phospho-Glu-tRNA(Gln). The sequence is that of Glutamyl-tRNA(Gln) amidotransferase subunit B, mitochondrial from Homo sapiens (Human).